Consider the following 369-residue polypeptide: FAD-dependent monooxygenase FPY4 (369 aa).

Belongs to the aromatic-ring hydroxylase family. FAD serves as cofactor.

Its pathway is secondary metabolite biosynthesis. FAD-dependent monooxygenase; part of the gene cluster that mediates the biosynthesis of the gamma-pyrones fusapyrone (FPY) and deoxyfusapyrone (dFPY). FPY is an undecaketide and thus likely synthesized by the polyketide synthase FPY1 from acetyl-CoA functioning as starter unit and the addition of 10 malonyl-CoA extender units by successive Claisen-condensations. Next to this, FPY shares some rare features: C-glycosylated 4-deoxyglucose at C-3, a gem-dimethyl group at C-13, and an alpha-beta to beta-gamma double bond shift at C-20. During FPY biosynthesis mono-C-methyl groups are transferred to the tetra-, penta-, hexa- and heptaketide, while two C-methyl groups are transferred to the nonaketide, suggesting that the CMet domain is programmed to selectively catalyze two successive C-alpha-methylation reactions of the nonaketide, while other alpha-carbons are non- or mono-methylated only. While the origin of the 4'-deoxyglucose moiety remains opaque, its transfer to C-3 is most likely mediated by the C-glycosyltransferase FPY2. Next to this, the hydroxyl group present at C-33 and discriminating between FPY and dFPY, is likely to be installed by the cytochrome P450 monooxygenase FPY7. No putative function can be predicted for the remaining genes FPY3-FPY6. The polypeptide is FAD-dependent monooxygenase FPY4 (Fusarium mangiferae (Mango malformation disease fungus)).